The primary structure comprises 287 residues: ATP synthase gamma chain (287 aa).

Belongs to the ATPase gamma chain family. In terms of assembly, F-type ATPases have 2 components, CF(1) - the catalytic core - and CF(0) - the membrane proton channel. CF(1) has five subunits: alpha(3), beta(3), gamma(1), delta(1), epsilon(1). CF(0) has three main subunits: a, b and c.

Its subcellular location is the cell inner membrane. In terms of biological role, produces ATP from ADP in the presence of a proton gradient across the membrane. The gamma chain is believed to be important in regulating ATPase activity and the flow of protons through the CF(0) complex. The protein is ATP synthase gamma chain of Edwardsiella ictaluri (strain 93-146).